Reading from the N-terminus, the 816-residue chain is Protein hunchback (816 aa).

4 disordered regions span residues 33-92 (LSHH…QPMD), 129-151 (QQHF…GGFN), 165-185 (YYGG…PTAV), and 197-229 (ALTP…LMSN). Low complexity-rich tracts occupy residues 49 to 60 (SNSNSGASSPRQ), 79 to 89 (QQQQQQQQQQQ), and 129 to 139 (QQHFQAAQHQQ). At Thr199 the chain carries Phosphothreonine. Phosphoserine is present on residues Ser209, Ser228, Ser230, and Ser231. Residues 219 to 229 (EPEKEHDLMSN) show a composition bias toward basic and acidic residues. C2H2-type zinc fingers lie at residues 261-283 (YKCK…TRTH), 290-312 (LQCA…IRKH), 318-340 (FQCD…RKSH), and 346-364 (YRCA…FKLH). Disordered stretches follow at residues 387-427 (VIDV…QQQQ), 536-612 (LQQQ…QLPH), and 679-734 (GSSA…SNPT). Composition is skewed to low complexity over residues 399-427 (SKSF…QQQQ) and 536-560 (LQQQ…QQQQ). The span at 567–578 (NEEDEEEEEHED) shows a compositional bias: acidic residues. Phosphoserine is present on residues Ser584 and Ser587. A compositionally biased stretch (low complexity) spans 712–734 (SASSTASSSGNSSNASSSTSNPT). 2 C2H2-type zinc fingers span residues 763-785 (YECK…MGYH) and 791-815 (FKCN…RNAH).

Belongs to the hunchback C2H2-type zinc-finger protein family.

It localises to the nucleus. Functionally, gap class segmentation protein that controls development of head structures. The sequence is that of Protein hunchback from Drosophila virilis (Fruit fly).